Consider the following 255-residue polypeptide: tRNA pseudouridine synthase A (255 aa).

The active-site Nucleophile is the aspartate 43. Tyrosine 94 serves as a coordination point for substrate.

This sequence belongs to the tRNA pseudouridine synthase TruA family.

The catalysed reaction is uridine(38/39/40) in tRNA = pseudouridine(38/39/40) in tRNA. In terms of biological role, formation of pseudouridine at positions 38, 39 and 40 in the anticodon stem and loop of transfer RNAs. This chain is tRNA pseudouridine synthase A, found in Pyrobaculum islandicum (strain DSM 4184 / JCM 9189 / GEO3).